Consider the following 706-residue polypeptide: Drebrin (706 aa).

Ala2 is modified (N-acetylalanine). Positions 3–134 (GVSFSGHRLE…DAGAIGQRLS (132 aa)) constitute an ADF-H domain. Phosphoserine is present on residues Ser141 and Ser142. Residues 209-236 (ERMEQERQEQEERERRYREREQQIEEHR) are compositionally biased toward basic and acidic residues. Positions 209-497 (ERMEQERQEQ…AEPAASVTSV (289 aa)) are disordered. Ser241 is subject to Phosphoserine. Basic and acidic residues predominate over residues 288-298 (DNPREFFRQQE). Residues 331–345 (SDSGPSSSSSSSSSP) show a composition bias toward low complexity. At Ser344 the chain carries Phosphoserine. Polar residues predominate over residues 357–366 (RTPNLSSSLP). Phosphothreonine occurs at positions 379 and 383. The segment covering 382–396 (PTRSPSDSSTASTPI) has biased composition (polar residues). A phosphoserine mark is found at Ser385, Ser387, and Ser393. Thr394 carries the post-translational modification Phosphothreonine. Residues 411–422 (QPPPPPPPPPPT) show a composition bias toward pro residues. Low complexity predominate over residues 453 to 497 (AAEPPQAQEPPLLQSSPLEDSMCTESPEQAALAAPAEPAASVTSV). A Phosphoserine modification is found at Ser468. Residue Thr550 is modified to Phosphothreonine. The interval 633 to 677 (EPHLLTNGETTQKEGTQASEGYFSQSQEEEFAQSEEPCAKVPPPV) is disordered. Over residues 639-651 (NGETTQKEGTQAS) the composition is skewed to polar residues. Ser658 carries the post-translational modification Phosphoserine.

Interacts with RUFY3. Interacts with CXCR4; this interaction is enhanced by antigenic stimulation. Interacts (via ADF-H domain) with ZMYND8 (via N-terminus); the interaction leads to sequestering of ZMYND8 in the cytoplasm. In terms of tissue distribution, expressed in the hippocampus, with expression in the pyramidal cells of CA1, CA2 and CA3 and in the granule cells of the dentate gyrus (at protein level). Highly expressed in brain, also present in stomach and to a lesser degree in kidney, colon, and urinary bladder. The E2 isoform is specifically expressed in adult stomach, kidney, and cultured cells.

It is found in the cytoplasm. The protein localises to the cell projection. The protein resides in the dendrite. Its subcellular location is the cell cortex. It localises to the cell junction. It is found in the growth cone. In terms of biological role, actin cytoskeleton-organizing protein that plays a role in the formation of cell projections. Required for actin polymerization at immunological synapses (IS) and for the recruitment of the chemokine receptor CXCR4 to IS. Plays a role in dendritic spine morphogenesis and organization, including the localization of the dopamine receptor DRD1 to the dendritic spines. Involved in memory-related synaptic plasticity in the hippocampus. In Mus musculus (Mouse), this protein is Drebrin (Dbn1).